Here is a 310-residue protein sequence, read N- to C-terminus: Homoserine kinase (310 aa).

95-105 provides a ligand contact to ATP; the sequence is PQSRGLGSSAA.

Belongs to the GHMP kinase family. Homoserine kinase subfamily.

It is found in the cytoplasm. The catalysed reaction is L-homoserine + ATP = O-phospho-L-homoserine + ADP + H(+). It participates in amino-acid biosynthesis; L-threonine biosynthesis; L-threonine from L-aspartate: step 4/5. In terms of biological role, catalyzes the ATP-dependent phosphorylation of L-homoserine to L-homoserine phosphate. This is Homoserine kinase from Corynebacterium kroppenstedtii (strain DSM 44385 / JCM 11950 / CIP 105744 / CCUG 35717).